The following is a 125-amino-acid chain: Oxytocin-neurophysin 1 (125 aa).

The N-terminal stretch at 1-19 is a signal peptide; sequence MAGPSLACCLLGLLALTSA. C20 and C25 are oxidised to a cystine. G28 carries the glycine amide modification. 7 disulfide bridges follow: C41–C85, C44–C58, C52–C75, C59–C65, C92–C104, C98–C116, and C105–C110.

It belongs to the vasopressin/oxytocin family. Interacts with oxytocin receptor (Ki=1.5 nM). Interacts with vasopressin V1aR/AVPR1A (Ki=37 nM), V1bR/AVPR1B (Ki=222 nM), and V2R/AVPR2 receptors (Ki=823 nM).

In terms of biological role, neurophysin 1 specifically binds oxytocin. Functionally, oxytocin causes contraction of the smooth muscle of the uterus and of the mammary gland. Acts by binding to oxytocin receptor (OXTR). The polypeptide is Oxytocin-neurophysin 1 (OXT) (Sus scrofa (Pig)).